The sequence spans 413 residues: BSD domain-containing protein 1-A (413 aa).

Residues 146-198 enclose the BSD domain; sequence WLAYWDPEQRKAEISELLVTSPSIRALFTKMVPAAVSHSEFWQRYFYKVHQLE. 2 stretches are compositionally biased toward basic and acidic residues: residues 208 to 219 and 255 to 271; these read KQRADQSVHSEE and HVEDKSEKTAELNRDHT. Disordered regions lie at residues 208 to 228 and 255 to 386; these read KQRADQSVHSEEPTWEEEEED and HVED…EFDM. The segment covering 274 to 287 has biased composition (low complexity); it reads TSPSESSESISPIT. Residues 297–322 are compositionally biased toward polar residues; that stretch reads QTPSKEPSPGTLTVTKENTGAGTDET. Positions 342–352 are enriched in basic and acidic residues; the sequence is QREDPPSDLRV. A compositionally biased stretch (polar residues) spans 356–375; it reads NSDSGKSTPSNNGQKGSSTD. Acidic residues predominate over residues 376–386; it reads ISEDWEKEFDM.

The polypeptide is BSD domain-containing protein 1-A (bsdc1-a) (Xenopus laevis (African clawed frog)).